The sequence spans 399 residues: Subtilisin-like protease 4 (399 aa).

A signal peptide spans 1–19 (MVCLKTLSVFLAAFAAADA). Residues 20-118 (RAVFKTQGHK…VEQDQVVRIS (99 aa)) constitute a propeptide that is removed on maturation. The Inhibitor I9 domain occupies 38 to 117 (YIVVMKDGVS…YVEQDQVVRI (80 aa)). The Peptidase S8 domain maps to 128-399 (SWGLGRVSHR…NRLLYNGSGQ (272 aa)). Residues Asp-160 and His-191 each act as charge relay system in the active site. Residues Asn-252 and Asn-308 are each glycosylated (N-linked (GlcNAc...) asparagine). The active-site Charge relay system is Ser-346. Residue Asn-395 is glycosylated (N-linked (GlcNAc...) asparagine).

The protein belongs to the peptidase S8 family.

It localises to the secreted. In terms of biological role, secreted subtilisin-like serine protease with keratinolytic activity that contributes to pathogenicity. This chain is Subtilisin-like protease 4 (SUB4), found in Arthroderma benhamiae (strain ATCC MYA-4681 / CBS 112371) (Trichophyton mentagrophytes).